Here is a 206-residue protein sequence, read N- to C-terminus: Ribosomal RNA small subunit methyltransferase G (206 aa).

Residues Gly-73, Leu-78, 124–125, and Arg-139 each bind S-adenosyl-L-methionine; that span reads VE.

The protein belongs to the methyltransferase superfamily. RNA methyltransferase RsmG family.

It localises to the cytoplasm. It carries out the reaction guanosine(527) in 16S rRNA + S-adenosyl-L-methionine = N(7)-methylguanosine(527) in 16S rRNA + S-adenosyl-L-homocysteine. In terms of biological role, specifically methylates the N7 position of guanine in position 527 of 16S rRNA. This Yersinia pseudotuberculosis serotype O:1b (strain IP 31758) protein is Ribosomal RNA small subunit methyltransferase G.